The sequence spans 273 residues: Putative phosphoenolpyruvate synthase regulatory protein (273 aa).

An ADP-binding site is contributed by glycine 153–threonine 160.

It belongs to the pyruvate, phosphate/water dikinase regulatory protein family. PSRP subfamily.

The enzyme catalyses [pyruvate, water dikinase] + ADP = [pyruvate, water dikinase]-phosphate + AMP + H(+). It catalyses the reaction [pyruvate, water dikinase]-phosphate + phosphate + H(+) = [pyruvate, water dikinase] + diphosphate. Its function is as follows. Bifunctional serine/threonine kinase and phosphorylase involved in the regulation of the phosphoenolpyruvate synthase (PEPS) by catalyzing its phosphorylation/dephosphorylation. This is Putative phosphoenolpyruvate synthase regulatory protein from Polaromonas naphthalenivorans (strain CJ2).